The primary structure comprises 401 residues: 1-deoxy-D-xylulose 5-phosphate reductoisomerase (401 aa).

Residues T11, G12, S13, I14, R38, N39, and N125 each coordinate NADPH. K126 contributes to the 1-deoxy-D-xylulose 5-phosphate binding site. E127 serves as a coordination point for NADPH. Position 151 (D151) interacts with Mn(2+). The 1-deoxy-D-xylulose 5-phosphate site is built by S152, E153, S179, and H202. E153 contacts Mn(2+). G208 contributes to the NADPH binding site. 1-deoxy-D-xylulose 5-phosphate contacts are provided by S215, N220, K221, and E224. Residue E224 coordinates Mn(2+).

Belongs to the DXR family. Requires Mg(2+) as cofactor. The cofactor is Mn(2+).

It carries out the reaction 2-C-methyl-D-erythritol 4-phosphate + NADP(+) = 1-deoxy-D-xylulose 5-phosphate + NADPH + H(+). It participates in isoprenoid biosynthesis; isopentenyl diphosphate biosynthesis via DXP pathway; isopentenyl diphosphate from 1-deoxy-D-xylulose 5-phosphate: step 1/6. Its function is as follows. Catalyzes the NADPH-dependent rearrangement and reduction of 1-deoxy-D-xylulose-5-phosphate (DXP) to 2-C-methyl-D-erythritol 4-phosphate (MEP). The sequence is that of 1-deoxy-D-xylulose 5-phosphate reductoisomerase from Paraburkholderia xenovorans (strain LB400).